Consider the following 264-residue polypeptide: Glutamate racemase (264 aa).

Residues 12 to 13 (DS) and 44 to 45 (YG) each bind substrate. C76 functions as the Proton donor/acceptor in the catalytic mechanism. Position 77–78 (77–78 (NT)) interacts with substrate. The Proton donor/acceptor role is filled by C186. 187 to 188 (TH) provides a ligand contact to substrate.

It belongs to the aspartate/glutamate racemases family.

It carries out the reaction L-glutamate = D-glutamate. Its pathway is cell wall biogenesis; peptidoglycan biosynthesis. Functionally, provides the (R)-glutamate required for cell wall biosynthesis. This Fusobacterium nucleatum subsp. nucleatum (strain ATCC 25586 / DSM 15643 / BCRC 10681 / CIP 101130 / JCM 8532 / KCTC 2640 / LMG 13131 / VPI 4355) protein is Glutamate racemase.